Consider the following 215-residue polypeptide: Beta-crystallin A3 (215 aa).

Residue methionine 1 is modified to N-acetylmethionine. Low complexity predominate over residues 1–16; sequence METQAEQQELETLPTT. The interval 1 to 29 is disordered; sequence METQAEQQELETLPTTKMAQTNPTPGSLG. The segment at 1–30 is N-terminal arm; that stretch reads METQAEQQELETLPTTKMAQTNPTPGSLGP. Glutamate 2 is modified (N-acetylalanine). Beta/gamma crystallin 'Greek key' domains lie at 31-70 and 71-117; these read WKIT…KVES and GAWI…RPIC. An S-glutathionyl cysteine; alternate mark is found at cysteine 82 and cysteine 117. Cysteine 82 and cysteine 117 each carry S-methylcysteine; alternate. Residues 118–123 form a connecting peptide region; that stretch reads SANHKE. Beta/gamma crystallin 'Greek key' domains follow at residues 124–165 and 166–214; these read SKMT…KIQS and GAWV…RRIQ. The residue at position 185 (cysteine 185) is an S-methylcysteine.

This sequence belongs to the beta/gamma-crystallin family. As to quaternary structure, homo/heterodimer, or complexes of higher-order. The structure of beta-crystallin oligomers seems to be stabilized through interactions between the N-terminal arms. Interacts with CRYBA1. Specific cleavages in the N-terminal arm occur during lens maturation and give rise to several truncated forms. Cleavages do not seem to have adverse effects on solubility. In terms of processing, S-methylation and glutathionylation occur in normal young lenses and do not seem to be detrimental.

Crystallins are the dominant structural components of the vertebrate eye lens. The chain is Beta-crystallin A3 from Homo sapiens (Human).